The following is a 215-amino-acid chain: Riboflavin synthase (215 aa).

2 Lumazine-binding repeats span residues 1–96 (MFTG…FGGH) and 97–193 (FVSG…YRFL). Residues 4–6 (GII), 47–49 (CLT), 61–66 (DVMPET), 100–102 (GHV), Lys-135, 144–146 (SLT), and 158–163 (SLIPHT) contribute to the 2,4-dihydroxypteridine site.

Homotrimer. Can interact with 6,7-dimethyl-8-ribityllumazine synthase, forming a lumazine synthase/riboflavin synthase complex, also designated as 'heavy riboflavin synthase complex', which consists of a trimer of riboflavin synthase enclosed within an icosahedral structure composed of 60 subunits of 6,7-dimethyl-8-ribityllumazine synthase.

The catalysed reaction is 2 6,7-dimethyl-8-(1-D-ribityl)lumazine + H(+) = 5-amino-6-(D-ribitylamino)uracil + riboflavin. Its pathway is cofactor biosynthesis; riboflavin biosynthesis; riboflavin from 2-hydroxy-3-oxobutyl phosphate and 5-amino-6-(D-ribitylamino)uracil: step 2/2. With respect to regulation, is activated by sulfite ions. Catalyzes the dismutation of two molecules of 6,7-dimethyl-8-ribityllumazine, resulting in the formation of riboflavin and 5-amino-6-(D-ribitylamino)uracil. The sequence is that of Riboflavin synthase (ribE) from Bacillus subtilis (strain 168).